We begin with the raw amino-acid sequence, 272 residues long: L-aspartate dehydrogenase 3 (272 aa).

Positions 126 and 194 each coordinate NAD(+). Residue His224 is part of the active site.

The protein belongs to the L-aspartate dehydrogenase family.

It carries out the reaction L-aspartate + NADP(+) + H2O = oxaloacetate + NH4(+) + NADPH + H(+). It catalyses the reaction L-aspartate + NAD(+) + H2O = oxaloacetate + NH4(+) + NADH + H(+). Its pathway is cofactor biosynthesis; NAD(+) biosynthesis; iminoaspartate from L-aspartate (dehydrogenase route): step 1/1. In terms of biological role, specifically catalyzes the NAD or NADP-dependent dehydrogenation of L-aspartate to iminoaspartate. The polypeptide is L-aspartate dehydrogenase 3 (Bordetella bronchiseptica (strain ATCC BAA-588 / NCTC 13252 / RB50) (Alcaligenes bronchisepticus)).